The sequence spans 192 residues: Large ribosomal subunit protein bL25 (192 aa).

It belongs to the bacterial ribosomal protein bL25 family. CTC subfamily. As to quaternary structure, part of the 50S ribosomal subunit; part of the 5S rRNA/L5/L18/L25 subcomplex. Contacts the 5S rRNA. Binds to the 5S rRNA independently of L5 and L18.

This is one of the proteins that binds to the 5S RNA in the ribosome where it forms part of the central protuberance. The chain is Large ribosomal subunit protein bL25 from Marinomonas sp. (strain MWYL1).